A 98-amino-acid polypeptide reads, in one-letter code: Hainantoxin-XVII.2 (98 aa).

Residues 1–40 (MTTVGVSLFRRSPEKITMKIAAFLGLSFLLIASYVLICEA) form the signal peptide. Residues 41-64 (QHPGFQELLILEENMRDPENSKER) constitute a propeptide that is removed on maturation. Cystine bridges form between Cys66/Cys81, Cys73/Cys85, and Cys80/Cys95.

Belongs to the hainantoxin family. 17 subfamily. As to expression, expressed by the venom gland.

The protein localises to the secreted. Its function is as follows. Putative ion channel inhibitor. The sequence is that of Hainantoxin-XVII.2 from Cyriopagopus hainanus (Chinese bird spider).